The sequence spans 439 residues: tRNA-2-methylthio-N(6)-dimethylallyladenosine synthase (439 aa).

An MTTase N-terminal domain is found at 2-119; sequence KYIYIKTWGC…LPKMIDEVEK (118 aa). Cysteine 11, cysteine 48, cysteine 82, cysteine 156, cysteine 160, and cysteine 163 together coordinate [4Fe-4S] cluster. Positions 142–374 constitute a Radical SAM core domain; sequence KKKGYTADIS…QERINIQTML (233 aa). The 63-residue stretch at 377–439 folds into the TRAM domain; that stretch reads RKMFGSIQSV…HTHSLKGELF (63 aa).

Belongs to the methylthiotransferase family. MiaB subfamily. Monomer. [4Fe-4S] cluster serves as cofactor.

Its subcellular location is the cytoplasm. The enzyme catalyses N(6)-dimethylallyladenosine(37) in tRNA + (sulfur carrier)-SH + AH2 + 2 S-adenosyl-L-methionine = 2-methylsulfanyl-N(6)-dimethylallyladenosine(37) in tRNA + (sulfur carrier)-H + 5'-deoxyadenosine + L-methionine + A + S-adenosyl-L-homocysteine + 2 H(+). Catalyzes the methylthiolation of N6-(dimethylallyl)adenosine (i(6)A), leading to the formation of 2-methylthio-N6-(dimethylallyl)adenosine (ms(2)i(6)A) at position 37 in tRNAs that read codons beginning with uridine. This chain is tRNA-2-methylthio-N(6)-dimethylallyladenosine synthase, found in Buchnera aphidicola subsp. Acyrthosiphon pisum (strain APS) (Acyrthosiphon pisum symbiotic bacterium).